Reading from the N-terminus, the 1617-residue chain is ATP-binding cassette sub-family A member 6 (1617 aa).

Residues 31–51 (LLEWGLSILLGLCIALFSSSM) traverse the membrane as a helical segment. Asn84 and Asn109 each carry an N-linked (GlcNAc...) asparagine glycan. A run of 6 helical transmembrane segments spans residues 222–242 (MFIL…SLNV), 268–288 (GLIY…IITF), 297–317 (FMVI…LVFL), 327–347 (LTNL…FTVF), 355–375 (LEWI…IQII), and 397–417 (IATF…ALYF). The ABC transporter 1 domain maps to 478–713 (IRIRNVKKEY…WGLGYHLSLH (236 aa)). 514 to 521 (GHSGAGKS) contacts ATP. A helical membrane pass occupies residues 854–874 (VLLTLLLVFGIAIFPLIVENI). A glycan (N-linked (GlcNAc...) asparagine) is linked at Asn940. A run of 6 helical transmembrane segments spans residues 1007 to 1027 (IGLW…LCSI), 1062 to 1082 (ALVD…IFYI), 1094 to 1114 (IVFA…FFIY), 1127 to 1147 (SGLW…ITLI), 1150 to 1170 (FDLS…LLGF), and 1194 to 1214 (ATDF…VFVL). The ABC transporter 2 domain maps to 1288 to 1513 (GQKKSCFSKR…LGKDYILELK (226 aa)). 1320-1327 (GPNGAGKS) serves as a coordination point for ATP.

The protein belongs to the ABC transporter superfamily. ABCA family. Widely expressed with higher expression in liver.

Its subcellular location is the golgi apparatus membrane. Probable transporter which may play a role in macrophage lipid transport and homeostasis. The polypeptide is ATP-binding cassette sub-family A member 6 (ABCA6) (Homo sapiens (Human)).